The chain runs to 530 residues: Na(+)/H(+) antiporter NhaB (530 aa).

A run of 12 helical transmembrane segments spans residues phenylalanine 13–proline 33, leucine 34–phenylalanine 54, leucine 90–methionine 110, isoleucine 121–phenylalanine 141, phenylalanine 145–isoleucine 165, leucine 205–proline 225, phenylalanine 241–isoleucine 261, glycine 306–isoleucine 326, glutamate 351–isoleucine 371, leucine 393–glycine 413, glycine 455–tyrosine 475, and methionine 481–leucine 501.

It belongs to the NhaB Na(+)/H(+) (TC 2.A.34) antiporter family.

It is found in the cell inner membrane. It carries out the reaction 2 Na(+)(in) + 3 H(+)(out) = 2 Na(+)(out) + 3 H(+)(in). In terms of biological role, na(+)/H(+) antiporter that extrudes sodium in exchange for external protons. This Aliivibrio fischeri (strain ATCC 700601 / ES114) (Vibrio fischeri) protein is Na(+)/H(+) antiporter NhaB.